We begin with the raw amino-acid sequence, 24 residues long: Pandinin-2 (24 aa).

Homooligomer. In terms of tissue distribution, expressed by the venom gland.

It localises to the secreted. Its subcellular location is the target cell membrane. Disrupts cell membranes through formation of pores. Has strong antimicrobial activity against Gram-positive bacteria B.subtilis, S.epidermidis, E.faecalis and S.aureus. Is less active against Gram-negative bacteria P.aeruginosa and E.coli. Also increases efficacy of antibiotics (ampicillin, chloramphenicol, streptomycin, kanamycin, novobiocin) when tested against E.coli, probably by facilitating their incorporation into the bacteria. Possesses antifungal activity against C.albicans and hemolytic activity against human, sheep and pig erythrocytes. This chain is Pandinin-2, found in Pandinus imperator (Emperor scorpion).